The following is a 639-amino-acid chain: Chaperone protein DnaK (639 aa).

T199 bears the Phosphothreonine; by autocatalysis mark. Positions 602–613 are enriched in low complexity; that stretch reads AQAQQAAAGAEG. Residues 602–639 are disordered; the sequence is AQAQQAAAGAEGQPEDASAKQDDDVVDAEFEEVKDDKK. The segment covering 625 to 639 has biased composition (acidic residues); the sequence is DVVDAEFEEVKDDKK.

Belongs to the heat shock protein 70 family.

Functionally, acts as a chaperone. The sequence is that of Chaperone protein DnaK from Pseudoalteromonas atlantica (strain T6c / ATCC BAA-1087).